Reading from the N-terminus, the 194-residue chain is Translationally-controlled tumor protein homolog 2 (194 aa).

Positions 1–194 constitute a TCTP domain; sequence MKLYKDLIGN…IKYGLLQVDV (194 aa).

This sequence belongs to the TCTP family.

Its subcellular location is the cytoplasm. In terms of biological role, involved in calcium binding and microtubule stabilization. This chain is Translationally-controlled tumor protein homolog 2, found in Dictyostelium discoideum (Social amoeba).